The sequence spans 140 residues: Ribosome maturation factor RimP (140 aa).

This sequence belongs to the RimP family.

It localises to the cytoplasm. Functionally, required for maturation of 30S ribosomal subunits. The protein is Ribosome maturation factor RimP of Campylobacter hominis (strain ATCC BAA-381 / DSM 21671 / CCUG 45161 / LMG 19568 / NCTC 13146 / CH001A).